A 492-amino-acid chain; its full sequence is Osmoregulated proline transporter OpuE (492 aa).

Transmembrane regions (helical) follow at residues 3 to 23 (IEII…GWYA), 40 to 60 (LGPF…WMLM), 62 to 82 (VPGA…GLTI), 125 to 145 (IVSA…GMVS), 161 to 181 (GLFL…FLAV), 190 to 210 (AIMF…VGGV), 224 to 244 (LLDI…AWGL), 271 to 291 (IGMS…LIGV), 314 to 334 (ILFH…AIMS), 365 to 385 (LVMI…LLSL), 394 to 414 (LVGY…LLSL), 424 to 444 (ALAA…TGLA), and 449 to 469 (VYEI…VSMI).

This sequence belongs to the sodium:solute symporter (SSF) (TC 2.A.21) family.

The protein localises to the cell membrane. It carries out the reaction L-proline(in) + Na(+)(in) = L-proline(out) + Na(+)(out). Functionally, catalyzes the uptake of extracellular proline under high-osmolarity growth conditions. Essential for the use of proline present in the environment as an osmoprotectant. This Bacillus subtilis (strain 168) protein is Osmoregulated proline transporter OpuE.